We begin with the raw amino-acid sequence, 202 residues long: Oocyte-secreted protein 1 (202 aa).

The first 21 residues, 1–21 (MKPFVGLLGLLLLLSFMKTCA), serve as a signal peptide directing secretion. Residues 157–183 (QPNLSTSSEDHHVSTEPWASETSRSEA) form a disordered region.

This sequence belongs to the PLAC1 family. Expressed in oocytes in primary through antral-stage follicles. Expressed in liver and ovary.

It localises to the secreted. In terms of biological role, may be involved in cell differentiation. This Mus musculus (Mouse) protein is Oocyte-secreted protein 1 (Oosp1).